The primary structure comprises 125 residues: Transmembrane protein 14EP (125 aa).

The next 2 helical transmembrane spans lie at 9 to 29 (VPLY…GISG) and 81 to 101 (ILTL…LIVS).

It belongs to the TMEM14 family.

The protein resides in the membrane. This chain is Transmembrane protein 14EP (TMEM14EP), found in Homo sapiens (Human).